The following is a 659-amino-acid chain: Pentatricopeptide repeat-containing protein At3g48810 (659 aa).

16 PPR repeats span residues Thr75–Cys109, Ser110–Pro144, Ser145–Pro179, Asn180–Pro214, Asp215–Glu243, Val245–Pro279, Asn280–Pro314, Asn315–Pro350, Asn351–Pro385, Asn386–Pro420, Asn421–Pro455, Ser456–Pro490, Asn492–Trp526, Ser527–Pro561, Asp562–Pro598, and Asp599–Pro633.

It belongs to the PPR family. P subfamily.

This is Pentatricopeptide repeat-containing protein At3g48810 from Arabidopsis thaliana (Mouse-ear cress).